The following is an 80-amino-acid chain: MSMTILPLELIDKCIGSNLWVIMKSEREFAGTLVGFDDYVNIVLKDVTEYDTVTGVTEKHSEMLLNGNGMCMLIPGGKPE.

The 74-residue stretch at 6–79 folds into the Sm domain; it reads LPLELIDKCI…MCMLIPGGKP (74 aa).

Belongs to the snRNP Sm proteins family. In terms of assembly, component of the heptameric LSM1-LSM7 complex that forms a seven-membered ring structure with a donut shape. The LSm subunits are arranged in the order lsm1, lsm2, lsm3, lsm6, lsm5, lsm7 and lsm4. Component of the heptameric LSM2-LSM8 complex that forms a seven-membered ring structure with a donut shape. The LSm subunits are arranged in the order lsm8, lsm2, lsm3, lsm6, lsm5, lsm7 and lsm4.

It localises to the nucleus. In terms of biological role, component of LSm protein complexes, which are involved in RNA processing and may function in a chaperone-like manner. Component of the cytoplasmic LSM1-LSM7 complex which is involved in mRNA degradation by activating the decapping step. The LSM1-LSM7 complex loads onto the 3'-end of single stranded RNA. Component of the nuclear LSM2-LSM8 complex, which is involved in spliceosome assembly. The LSM2-LSM8 complex plays a role in the biogenesis of the spliceosomal U4/U6-U5 tri-snRNP complex by accelerating prp24-mediated annealing of U4/U6 di-snRNA. The LSM2-LSM8 complex binds U6 snRNA terminating with a cyclic 2',3' phosphate group; RNA with an unmodified 3' hydroxyl or non-cyclic 3' phosphate is bound less tightly. In Schizosaccharomyces pombe (strain 972 / ATCC 24843) (Fission yeast), this protein is LSM complex subunit lsm5 (lsm5).